A 472-amino-acid chain; its full sequence is Glutamate--tRNA ligase (472 aa).

Positions 18 to 28 match the 'HIGH' region motif; it reads PSPTGYLHIGG. Residues 122 to 138 are compositionally biased toward basic and acidic residues; that stretch reads RARGEKPRYDGRWRPEP. The tract at residues 122 to 150 is disordered; it reads RARGEKPRYDGRWRPEPGKTLPVPPSGVQ. A 'KMSKS' region motif is present at residues 250-254; that stretch reads KLSKR. Position 253 (K253) interacts with ATP.

It belongs to the class-I aminoacyl-tRNA synthetase family. Glutamate--tRNA ligase type 1 subfamily. Monomer.

The protein localises to the cytoplasm. It carries out the reaction tRNA(Glu) + L-glutamate + ATP = L-glutamyl-tRNA(Glu) + AMP + diphosphate. In terms of biological role, catalyzes the attachment of glutamate to tRNA(Glu) in a two-step reaction: glutamate is first activated by ATP to form Glu-AMP and then transferred to the acceptor end of tRNA(Glu). The protein is Glutamate--tRNA ligase of Thiobacillus denitrificans (strain ATCC 25259 / T1).